The primary structure comprises 313 residues: Ribosomal RNA small subunit methyltransferase H (313 aa).

S-adenosyl-L-methionine is bound by residues 35 to 37 (GGH), D55, F81, D103, and Q110.

It belongs to the methyltransferase superfamily. RsmH family.

Its subcellular location is the cytoplasm. It carries out the reaction cytidine(1402) in 16S rRNA + S-adenosyl-L-methionine = N(4)-methylcytidine(1402) in 16S rRNA + S-adenosyl-L-homocysteine + H(+). In terms of biological role, specifically methylates the N4 position of cytidine in position 1402 (C1402) of 16S rRNA. The polypeptide is Ribosomal RNA small subunit methyltransferase H (Pseudomonas aeruginosa (strain UCBPP-PA14)).